A 260-amino-acid chain; its full sequence is Homeobox-leucine zipper protein HOX25 (260 aa).

Residues 1-10 (MEDLVDELYG) show a composition bias toward acidic residues. Disordered stretches follow at residues 1–24 (MEDLVDELYGVDEQGSSSAAARKR), 121–145 (ANGKSPSPSPAPAEQTAVPAAPESA), and 190–221 (SPESYFAGARSPPSSSEDDCGGAGSDDDYPSS). The segment at residues 19–79 (AAARKRRLTA…NRRARWKTKQ (61 aa)) is a DNA-binding region (homeobox). A leucine-zipper region spans residues 78–122 (KQLELDFDRLRAAHDELLAGRAALAADNESLRSQVILLTEKLQAN). The span at 205–218 (SEDDCGGAGSDDDY) shows a compositional bias: acidic residues.

It belongs to the HD-ZIP homeobox family. Class I subfamily. As to expression, expressed in roots, leaf sheaths and blades and panicles.

The protein resides in the nucleus. Functionally, probable transcription factor. This Oryza sativa subsp. indica (Rice) protein is Homeobox-leucine zipper protein HOX25 (HOX25).